A 1152-amino-acid chain; its full sequence is DNA-directed RNA polymerase subunit beta' (1152 aa).

Residues Cys-60, Cys-62, Cys-75, and Cys-78 each coordinate Zn(2+). The Mg(2+) site is built by Asp-449, Asp-451, and Asp-453. Zn(2+) contacts are provided by Cys-779, Cys-853, Cys-860, and Cys-863.

Belongs to the RNA polymerase beta' chain family. The RNAP catalytic core consists of 2 alpha, 1 beta, 1 beta' and 1 omega subunit. When a sigma factor is associated with the core the holoenzyme is formed, which can initiate transcription. The cofactor is Mg(2+). It depends on Zn(2+) as a cofactor.

It catalyses the reaction RNA(n) + a ribonucleoside 5'-triphosphate = RNA(n+1) + diphosphate. In terms of biological role, DNA-dependent RNA polymerase catalyzes the transcription of DNA into RNA using the four ribonucleoside triphosphates as substrates. This chain is DNA-directed RNA polymerase subunit beta', found in Carboxydothermus hydrogenoformans (strain ATCC BAA-161 / DSM 6008 / Z-2901).